The sequence spans 511 residues: MEFSPRAAELTTLLESRITNFYTNFQVDEIGRVISVGDGIARVYGLNEIQAGEMVEFASGVKGIALNLENENVGIVVFGSDTAIKEGDLVKRTGSIVDVPAGKSLLGRVVDALGVPIDGRGALGDHERRRVEVKVPGIIERKSVHEPMQTGLKAVDSLVPIGRGQRELIIGDRQTGKTAIAIDTILNQKQMNSRATSESETLYCVYVAIGQKRSTVAQLVQILSEGNALEYSILVAATASDPAPLQFLAPYSGCAMGEYFRDNGMHALIIYDDLSKQAVAYRQMSLLLRRPPGREAFPGDVFYLHSRLLERAAKRSDQTGAGSLTALPVIETQAGDVSAYIPTNVISITDGQICLETELFYRGIRPAINVGLSVSRVGSAAQLKAMKQVCGSLKLELAQYREVAAFAQFGSDLDAATQALLNRGARLTEILKQPQYAPLPIEKQIIVIYAAVNGFCDRMPLDRISQYERAIPQSVKQELLQSLVEKGGLNNERKIEPDAFLKENAKPYIKG.

Position 171-178 (171-178) interacts with ATP; the sequence is GDRQTGKT.

The protein belongs to the ATPase alpha/beta chains family. In terms of assembly, F-type ATPases have 2 components, CF(1) - the catalytic core - and CF(0) - the membrane proton channel. CF(1) has five subunits: alpha(3), beta(3), gamma(1), delta(1), epsilon(1). CF(0) has three main subunits: a, b and c.

Its subcellular location is the mitochondrion. The protein localises to the mitochondrion inner membrane. Functionally, mitochondrial membrane ATP synthase (F(1)F(0) ATP synthase or Complex V) produces ATP from ADP in the presence of a proton gradient across the membrane which is generated by electron transport complexes of the respiratory chain. F-type ATPases consist of two structural domains, F(1) - containing the extramembraneous catalytic core, and F(0) - containing the membrane proton channel, linked together by a central stalk and a peripheral stalk. During catalysis, ATP synthesis in the catalytic domain of F(1) is coupled via a rotary mechanism of the central stalk subunits to proton translocation. Subunits alpha and beta form the catalytic core in F(1). Rotation of the central stalk against the surrounding alpha(3)beta(3) subunits leads to hydrolysis of ATP in three separate catalytic sites on the beta subunits. Subunit alpha does not bear the catalytic high-affinity ATP-binding sites. This is ATP synthase subunit alpha, mitochondrial (ATPA) from Oenothera biennis (German evening primrose).